The sequence spans 231 residues: GSK-3-binding protein FRAT2 (231 aa).

Disordered regions lie at residues 1 to 24 (MPCRREEEEEAGDEAEGEEDDDSF) and 53 to 109 (DTAH…PGAV). Positions 7–23 (EEEEAGDEAEGEEDDDS) are enriched in acidic residues. Residues 172–194 (DPHRLLQQLVLSGNLIKEAVRRL) form an involved in GSK-3 binding region. The segment at 203 to 231 (ATSPASAPGSGGGRSGPDSVTLQPSGAWL) is disordered.

Belongs to the GSK-3-binding protein family. In terms of assembly, binds GSK-3 and prevents GSK-3-dependent phosphorylation.

Functionally, positively regulates the Wnt signaling pathway by stabilizing beta-catenin through the association with GSK-3. The polypeptide is GSK-3-binding protein FRAT2 (Frat2) (Mus musculus (Mouse)).